A 351-amino-acid polypeptide reads, in one-letter code: Sulfate/thiosulfate import ATP-binding protein CysA (351 aa).

In terms of domain architecture, ABC transporter spans 3–237; it reads ITVRNLHKRF…PRSAFVYEFL (235 aa). 35–42 provides a ligand contact to ATP; it reads GPSGCGKT.

The protein belongs to the ABC transporter superfamily. Sulfate/tungstate importer (TC 3.A.1.6) family. In terms of assembly, the complex is composed of two ATP-binding proteins (CysA), two transmembrane proteins (CysT and CysW) and a solute-binding protein (CysP).

Its subcellular location is the cell inner membrane. It carries out the reaction sulfate(out) + ATP + H2O = sulfate(in) + ADP + phosphate + H(+). The enzyme catalyses thiosulfate(out) + ATP + H2O = thiosulfate(in) + ADP + phosphate + H(+). Functionally, part of the ABC transporter complex CysAWTP involved in sulfate/thiosulfate import. Responsible for energy coupling to the transport system. This is Sulfate/thiosulfate import ATP-binding protein CysA from Burkholderia pseudomallei (strain K96243).